A 481-amino-acid polypeptide reads, in one-letter code: MALSYRVSELQSTIPEHILQSTFVHVISSNWSGLQTESIPEEMKQIVEEQGNKLHWAALLILMVIIPTIGGNTLVILAVSLEKKLQYATNYFLMSLAVADLLVGLFVMPIALLTIMFEAMWPLPLVLCPAWLFLDVLFSTASIMHLCAISVDRYIAIKKPIQANQYNSRATAFIKITVVWLISIGIAIPVPIKGIETDVDNPNNITCVLTKERFGDFMLFGSLAAFFTPLAIMIVTYFLTIHALQKKAYLVKNKPPQRLTWLTVSTVFQRDETPCSSPEKVAMLDGSRKDKALPNSGDETLMRRTSTIGKKSVQTISNEQRASKVLGIVFFLFLLMWCPFFITNITLVLCDSCNQTTLQMLLEIFVWIGYVSSGVNPLVYTLFNKTFRDAFGRYITCNYRATKSVKTLRKRSSKIYFRNPMAENSKFFKKHGIRNGINPAMYQSPMRLRSSTIQSSSIILLDTLLLTENEGDKTEEQVSYV.

Residues 1 to 56 (MALSYRVSELQSTIPEHILQSTFVHVISSNWSGLQTESIPEEMKQIVEEQGNKLHW) lie on the Extracellular side of the membrane. N-linked (GlcNAc...) asparagine glycosylation is present at asparagine 30. The helical transmembrane segment at 57-79 (AALLILMVIIPTIGGNTLVILAV) threads the bilayer. At 80–90 (SLEKKLQYATN) the chain is on the cytoplasmic side. Residues 91–113 (YFLMSLAVADLLVGLFVMPIALL) traverse the membrane as a helical segment. The Extracellular portion of the chain corresponds to 114–129 (TIMFEAMWPLPLVLCP). The cysteines at positions 128 and 207 are disulfide-linked. Residues 130–151 (AWLFLDVLFSTASIMHLCAISV) traverse the membrane as a helical segment. 2 residues coordinate ergotamine: aspartate 135 and threonine 140. The DRY motif; important for ligand-induced conformation changes signature appears at 152 to 154 (DRY). The Cytoplasmic segment spans residues 152 to 171 (DRYIAIKKPIQANQYNSRAT). The chain crosses the membrane as a helical span at residues 172–192 (AFIKITVVWLISIGIAIPVPI). The Extracellular segment spans residues 193 to 216 (KGIETDVDNPNNITCVLTKERFGD). Leucine 209 lines the ergotamine pocket. Positions 212-215 (ERFG) match the [DE]RFG motif; may stabilize a conformation that preferentially activates signaling via beta-arrestin family members motif. Residues 217–239 (FMLFGSLAAFFTPLAIMIVTYFL) traverse the membrane as a helical segment. Residues 240 to 324 (TIHALQKKAY…TISNEQRASK (85 aa)) are Cytoplasmic-facing. Residues 325–345 (VLGIVFFLFLLMWCPFFITNI) traverse the membrane as a helical segment. Topologically, residues 346–360 (TLVLCDSCNQTTLQM) are extracellular. Cysteine 350 and cysteine 353 are disulfide-bonded. A helical transmembrane segment spans residues 361-382 (LLEIFVWIGYVSSGVNPLVYTL). The short motif at 376 to 380 (NPLVY) is the NPxxY motif; important for ligand-induced conformation changes and signaling element. Topologically, residues 383 to 481 (FNKTFRDAFG…DKTEEQVSYV (99 aa)) are cytoplasmic. Cysteine 397 carries S-palmitoyl cysteine lipidation. The PDZ-binding motif lies at 479–481 (SYV).

The protein belongs to the G-protein coupled receptor 1 family. In terms of assembly, interacts (via C-terminus) with MPDZ. As to expression, ubiquitous. Detected in liver, kidney, heart, pulmonary artery, and intestine. Detected at lower levels in blood, placenta and brain, especially in cerebellum, occipital cortex and frontal cortex.

The protein resides in the cell membrane. Its subcellular location is the synapse. It localises to the synaptosome. Functionally, G-protein coupled receptor for 5-hydroxytryptamine (serotonin). Also functions as a receptor for various ergot alkaloid derivatives and psychoactive substances. Ligand binding causes a conformation change that triggers signaling via guanine nucleotide-binding proteins (G proteins) and modulates the activity of downstream effectors. HTR2B is coupled to G(q)/G(11) G alpha proteins and activates phospholipase C-beta, releasing diacylglycerol (DAG) and inositol 1,4,5-trisphosphate (IP3) second messengers that modulate the activity of phosphatidylinositol 3-kinase and promote the release of Ca(2+) ions from intracellular stores, respectively. Beta-arrestin family members inhibit signaling via G proteins and mediate activation of alternative signaling pathways. Plays a role in the regulation of dopamine and 5-hydroxytryptamine release, 5-hydroxytryptamine uptake and in the regulation of extracellular dopamine and 5-hydroxytryptamine levels, and thereby affects neural activity. May play a role in the perception of pain. Plays a role in the regulation of behavior, including impulsive behavior. Required for normal proliferation of embryonic cardiac myocytes and normal heart development. Protects cardiomyocytes against apoptosis. Plays a role in the adaptation of pulmonary arteries to chronic hypoxia. Plays a role in vasoconstriction. Required for normal osteoblast function and proliferation, and for maintaining normal bone density. Required for normal proliferation of the interstitial cells of Cajal in the intestine. The polypeptide is 5-hydroxytryptamine receptor 2B (Homo sapiens (Human)).